Reading from the N-terminus, the 115-residue chain is MMSASTMAKVMILMLAVCLLTQADGKPVKKRAVSEIQLMHNLGKHLASVERMQWLRKKLQDVHNFVSLGVQMAAREGSYQRPTKKEENVLVDGNSKSLGEGDKADVDVLVKAKSQ.

An N-terminal signal peptide occupies residues 1-25 (MMSASTMAKVMILMLAVCLLTQADG). The propeptide occupies 26–31 (KPVKKR). The tract at residues 51 to 69 (RMQWLRKKLQDVHNFVSLG) is important for receptor binding. The tract at residues 76–101 (EGSYQRPTKKEENVLVDGNSKSLGEG) is disordered.

Belongs to the parathyroid hormone family. As to quaternary structure, interacts with PTH1R (via N-terminal extracellular domain). Hypothalamus and parathyroid gland.

It is found in the secreted. Its function is as follows. Parathyroid hormone elevates calcium level by dissolving the salts in bone and preventing their renal excretion. Acts by binding to its receptor, PTH1R, activating G protein-coupled receptor signaling. Stimulates [1-14C]-2-deoxy-D-glucose (2DG) transport and glycogen synthesis in osteoblastic cells. The sequence is that of Parathyroid hormone (Pth) from Rattus norvegicus (Rat).